The primary structure comprises 176 residues: HTH-type transcriptional regulator DctR (176 aa).

One can recognise an HTH luxR-type domain in the interval 109–174; that stretch reads VPEANVSLSR…ELVRHQHIDY (66 aa). Positions 133–152 form a DNA-binding region, H-T-H motif; the sequence is TEDILEKLKISLKTFYCHKH.

Its function is as follows. May act as a transcriptional regulator of dctA. This Shigella flexneri protein is HTH-type transcriptional regulator DctR (dctR).